A 413-amino-acid chain; its full sequence is MQNHHHQQSSYGGGYPGQAYREQHPPPNPYGYGQPSPQPGYGAPPPHNGYGQPPSGYGQPPPPTGNAVYGGRQPGMNQYQNTYSHGHQGGPPPPPTDPVAFGHGAPQGYSFQYSRCTGKRKALLIGINYFGQKGQLRGCINDVKNMSTYLNQNFGYAREDMVLLTDDQQNPMSQPTKANILRAMHWLVKDAQPNDSLFFHYSGHGGQTPDLDGDEEDGYDEVIYPVDFRQAGHIVDDEMHRIMVRPLRPGVRLTAIFDSCHSGSALDLPYIYSTQGILKEPNLAKEAGQGLLGVVSAYARGDMSGMVSTAVGFLKRATKGDEAYTRSKQTKTSPADVIMWSGSKDSQTSQDAQIGGQATGAMSWAFITALRKNPQQSYVQLLNSIRDELATKYSQKPQLSCSHPLDTNLLYVM.

The interval 1–104 (MQNHHHQQSS…PTDPVAFGHG (104 aa)) is disordered. Positions 36–47 (SPQPGYGAPPPH) are enriched in pro residues. Low complexity predominate over residues 49–58 (GYGQPPSGYG). Residues 75-85 (GMNQYQNTYSH) are compositionally biased toward polar residues. Active-site residues include histidine 204 and cysteine 260.

This sequence belongs to the peptidase C14B family.

Functionally, involved in cell death (apoptosis). Required for the apoptotic-like loss of membrane phospholipid asymmetry at stationary phase and facilitates growth under conditions of endoplasmic reticulum stress. The sequence is that of Metacaspase-1A (casA) from Aspergillus fumigatus (strain CBS 144.89 / FGSC A1163 / CEA10) (Neosartorya fumigata).